A 107-amino-acid chain; its full sequence is Phosphoribosyl-ATP pyrophosphatase (107 aa).

The protein belongs to the PRA-PH family.

The protein localises to the cytoplasm. The enzyme catalyses 1-(5-phospho-beta-D-ribosyl)-ATP + H2O = 1-(5-phospho-beta-D-ribosyl)-5'-AMP + diphosphate + H(+). It functions in the pathway amino-acid biosynthesis; L-histidine biosynthesis; L-histidine from 5-phospho-alpha-D-ribose 1-diphosphate: step 2/9. In Bacillus cereus (strain ZK / E33L), this protein is Phosphoribosyl-ATP pyrophosphatase.